The following is a 327-amino-acid chain: Zinc transport protein ZntB (327 aa).

Over 1 to 273 (MEAIKGSDVN…ARRTYTMSLM (273 aa)) the chain is Cytoplasmic. The helical transmembrane segment at 274–294 (AMVFLPSTFLTGLFGVNLGGI) threads the bilayer. Residues 295-300 (PGGGWQ) lie on the Periplasmic side of the membrane. The helical transmembrane segment at 301 to 321 (FGFSIFCILLVVLIGGVALWL) threads the bilayer. At 322 to 327 (HRSKWL) the chain is on the cytoplasmic side.

Belongs to the CorA metal ion transporter (MIT) (TC 1.A.35) family.

It is found in the cell inner membrane. The enzyme catalyses Zn(2+)(out) + H(+)(out) = Zn(2+)(in) + H(+)(in). Its function is as follows. Zinc transporter. Acts as a Zn(2+):proton symporter, which likely mediates zinc ion uptake. The polypeptide is Zinc transport protein ZntB (Escherichia coli O139:H28 (strain E24377A / ETEC)).